The primary structure comprises 525 residues: GMP synthase [glutamine-hydrolyzing] (525 aa).

A Glutamine amidotransferase type-1 domain is found at 12 to 203; sequence TVLVVDFGAQ…LYRGAGLTPS (192 aa). Catalysis depends on cysteine 89, which acts as the Nucleophile. Residues histidine 177 and glutamate 179 contribute to the active site. Residues 204–399 enclose the GMPS ATP-PPase domain; it reads WTTGNVIDEQ…LGLPDEIVQR (196 aa). Residue 231 to 237 participates in ATP binding; sequence SGGVDSA.

Homodimer.

The enzyme catalyses XMP + L-glutamine + ATP + H2O = GMP + L-glutamate + AMP + diphosphate + 2 H(+). Its pathway is purine metabolism; GMP biosynthesis; GMP from XMP (L-Gln route): step 1/1. In terms of biological role, catalyzes the synthesis of GMP from XMP. This is GMP synthase [glutamine-hydrolyzing] from Streptomyces avermitilis (strain ATCC 31267 / DSM 46492 / JCM 5070 / NBRC 14893 / NCIMB 12804 / NRRL 8165 / MA-4680).